The sequence spans 480 residues: Cysteine--tRNA ligase (480 aa).

Cysteine 27 contributes to the Zn(2+) binding site. The 'HIGH' region signature appears at 29–39; the sequence is PTVYNYAHIGN. Residues cysteine 221, histidine 246, and glutamate 250 each contribute to the Zn(2+) site. Residues 278 to 282 carry the 'KMSKS' region motif; it reads KMSKS. Lysine 281 is a binding site for ATP.

This sequence belongs to the class-I aminoacyl-tRNA synthetase family. Monomer. Requires Zn(2+) as cofactor.

The protein localises to the cytoplasm. It carries out the reaction tRNA(Cys) + L-cysteine + ATP = L-cysteinyl-tRNA(Cys) + AMP + diphosphate. This chain is Cysteine--tRNA ligase, found in Borreliella afzelii (strain PKo) (Borrelia afzelii).